A 291-amino-acid polypeptide reads, in one-letter code: Ribonuclease Z (291 aa).

Zn(2+)-binding residues include H60, H62, D64, H65, H132, D200, and H256. D64 (proton acceptor) is an active-site residue.

The protein belongs to the RNase Z family. In terms of assembly, homodimer. It depends on Zn(2+) as a cofactor.

It catalyses the reaction Endonucleolytic cleavage of RNA, removing extra 3' nucleotides from tRNA precursor, generating 3' termini of tRNAs. A 3'-hydroxy group is left at the tRNA terminus and a 5'-phosphoryl group is left at the trailer molecule.. Functionally, zinc phosphodiesterase, which displays some tRNA 3'-processing endonuclease activity. Probably involved in tRNA maturation, by removing a 3'-trailer from precursor tRNA. This is Ribonuclease Z from Metallosphaera sedula (strain ATCC 51363 / DSM 5348 / JCM 9185 / NBRC 15509 / TH2).